The following is a 154-amino-acid chain: Myoglobin (154 aa).

One can recognise a Globin domain in the interval 2-148 (GLSDGEWHLV…FRNDIAAKIK (147 aa)). The residue at position 4 (S4) is a Phosphoserine. H65 contacts nitrite. H65 is an O2 binding site. At T68 the chain carries Phosphothreonine. A heme b-binding site is contributed by H94.

Belongs to the globin family. In terms of assembly, monomeric.

Its subcellular location is the cytoplasm. The protein localises to the sarcoplasm. It catalyses the reaction Fe(III)-heme b-[protein] + nitric oxide + H2O = Fe(II)-heme b-[protein] + nitrite + 2 H(+). It carries out the reaction H2O2 + AH2 = A + 2 H2O. In terms of biological role, monomeric heme protein which primary function is to store oxygen and facilitate its diffusion within muscle tissues. Reversibly binds oxygen through a pentacoordinated heme iron and enables its timely and efficient release as needed during periods of heightened demand. Depending on the oxidative conditions of tissues and cells, and in addition to its ability to bind oxygen, it also has a nitrite reductase activity whereby it regulates the production of bioactive nitric oxide. Under stress conditions, like hypoxia and anoxia, it also protects cells against reactive oxygen species thanks to its pseudoperoxidase activity. The protein is Myoglobin (MB) of Pusa sibirica (Baikal seal).